The primary structure comprises 67 residues: Protein AaeX (67 aa).

Transmembrane regions (helical) follow at residues 8-28 (VLFGLSFPPAFFALLAALPLF) and 47-67 (PALFNCALYGCLFYLVSWLFI).

It belongs to the AaeX family.

It localises to the cell membrane. The protein is Protein AaeX of Edwardsiella piscicida.